Reading from the N-terminus, the 445-residue chain is StAR-related lipid transfer protein 3 (445 aa).

The Cytoplasmic segment spans residues 1–51 (MSKLPRELTRDLERSLPAVASLGSSLSHSQSLSSHLLPPPEKRRAISDVRR). The MENTAL domain occupies 46-217 (ISDVRRTFCL…YSPPESFAGS (172 aa)). The helical transmembrane segment at 52 to 72 (TFCLFVTFDLLFISLLWIIEL) threads the bilayer. The Extracellular segment spans residues 73-94 (NTNTGIRKNLEQEIIQYNFKTS). A helical membrane pass occupies residues 95–115 (FFDIFVLAFFRFSGLLLGYAV). The Cytoplasmic segment spans residues 116-120 (LRLRH). A helical transmembrane segment spans residues 121–141 (WWVIAVTTLVSSAFLIVKVIL). Residues 142-148 (SELLSKG) are Extracellular-facing. The chain crosses the membrane as a helical span at residues 149–169 (AFGYLLPIVSFVLAWLETWFL). Topologically, residues 170 to 445 (DFKVLPQEAE…QRISELGARA (276 aa)) are cytoplasmic. Residues 206–212 (QFYSPPE) carry the FFAT motif. Residue Ser209 is modified to Phosphoserine. Positions 230 to 443 (SFSAQEREYI…LRQRISELGA (214 aa)) constitute an START domain.

Belongs to the STARD3 family. Homodimer. Interacts (via the MENTAL domain) with STARD3NL. Interacts (via phosphorylated FFAT motif) with VAPA (via MSP domain). Interacts (via phosphorylated FFAT motif) with VAPB (via MSP domain). Interacts (via phosphorylated FFAT motif) with MOSPD2 (via MSP domain); this interaction allows enrichment of MOSPD2 around endosomes. Post-translationally, phosphorylation at Ser-209 is necessary and sufficient for the direct interaction of the phosphorylated FFAT motif with the MSP domain of MOSPD2, VAPA and VAPB and allows the tethering of two membranes that participates in the formation of ER-endosome contacts. Phosphorylation of the FFAT motif leads to conformation changes. Additional phosphorylations around the core FFAT motif (QFYSPPE) are not essential but strengthen the interaction with MOSPD2, VAPA and VAPB. Phosphorylation at Ser-209 of FFAT motif drives membrane tethering between the endoplasmic reticulum and late endosomes via interaction with VAPA and VAPB that in turn allows the efficient transport of sterol mediated by the START domain. As to expression, expressed in retina.

It localises to the late endosome membrane. It catalyses the reaction cholesterol(in) = cholesterol(out). Functionally, sterol-binding protein that mediates cholesterol transport from the endoplasmic reticulum to endosomes. The sterol transport mechanism is triggered by phosphorylation of FFAT motif that leads to membrane tethering between the endoplasmic reticulum and late endosomes via interaction with VAPA and VAPB. Acts as a lipid transfer protein that redirects sterol to the endosome at the expense of the cell membrane and favors membrane formation inside endosomes. May also mediate cholesterol transport between other membranes, such as mitochondria membrane or cell membrane. However, such results need additional experimental evidences; probably mainly mediates cholesterol transport from the endoplasmic reticulum to endosomes. Does not activate transcriptional cholesterol sensing. Able to bind other lipids, such as lutein, a xanthophyll carotenoids that form the macular pigment of the retina. In Homo sapiens (Human), this protein is StAR-related lipid transfer protein 3.